A 315-amino-acid polypeptide reads, in one-letter code: Gamma-hemolysin component C (315 aa).

Positions 1–29 (MLKNKILATTLSVSLLAPLANPLLENAKA) are cleaved as a signal peptide.

This sequence belongs to the aerolysin family. In terms of assembly, toxicity requires sequential binding and synergistic association of a class S and a class F component which form heterooligomeric complexes. HlgC (class S) associates with HlgB (class F) thus forming an CB toxin.

In terms of biological role, toxin that seems to act by forming pores in the membrane of the cell. Has a hemolytic and a leucotoxic activity. In Staphylococcus aureus (strain Mu50 / ATCC 700699), this protein is Gamma-hemolysin component C (hlgC).